We begin with the raw amino-acid sequence, 130 residues long: MIQTQNYGTGRRKSSSARVFLRSGNGEIVVNKRSLNEYFGRETSCMIVRQPLELVDMVDKFNIYITVKGGGISGQAGAIRQGITRALIKYNQTLRFELRKAGFITRDSRQVERKKVGFRKARKRPQFSKR.

Belongs to the universal ribosomal protein uS9 family.

This chain is Small ribosomal subunit protein uS9, found in Buchnera aphidicola subsp. Acyrthosiphon pisum (strain Tuc7).